The following is a 273-amino-acid chain: Histidine racemase (273 aa).

The active-site Proton acceptor is the Cys72. The active-site Proton donor is the Cys211.

Belongs to the histidine racemase family. Homodimer.

It is found in the cytoplasm. The catalysed reaction is L-histidine = D-histidine. Its function is as follows. Isomerase that catalyzes the conversion of L-histidine to D-histidine. Functions the biosynthesis of the metallophore staphylopine, which is involved in the acquisition of nickel, cobalt, zinc, copper, and iron, and thus enables bacterial growth inside the host, where metal access is limited. Therefore, this enzyme probably contributes to staphylococcal virulence. The reaction is reversible in vitro, the enzyme can produce D-histidine from the L-stereoisomer and vice versa. Appears to be specific for histidine as it cannot use other amino acids as substrate, including L-alanine and L-methionine. The chain is Histidine racemase from Staphylococcus aureus (strain Mu50 / ATCC 700699).